Reading from the N-terminus, the 134-residue chain is Small ribosomal subunit protein uS9 (134 aa).

The disordered stretch occupies residues aspartate 109–arginine 134. Positions proline 118–arginine 134 are enriched in basic residues.

This sequence belongs to the universal ribosomal protein uS9 family.

In Methanococcus maripaludis (strain C7 / ATCC BAA-1331), this protein is Small ribosomal subunit protein uS9.